The primary structure comprises 658 residues: ATP-dependent zinc metalloprotease FtsH 4 (658 aa).

The tract at residues 1–22 (MREPTNRQGSPGPGEPRPPAQG) is disordered. Topologically, residues 1-28 (MREPTNRQGSPGPGEPRPPAQGRPRFPT) are cytoplasmic. A helical transmembrane segment spans residues 29–49 (WILWVALLALALWNVYTFFWP). Residues 50–149 (SSGARLNIPY…TVKIDQAGGS (100 aa)) lie on the Extracellular side of the membrane. The segment at 95-114 (QVLSPGDPVPPGTSPNEIRT) is disordered. The helical transmembrane segment at 150-170 (VWPSLLATIVPLFLFIGLMVY) threads the bilayer. Topologically, residues 171 to 658 (LGRSMSRGQQ…AAPAAAADSV (488 aa)) are cytoplasmic. Residue 243 to 250 (GPPGTGKT) participates in ATP binding. Residue His464 coordinates Zn(2+). Residue Glu465 is part of the active site. His468 and Asp540 together coordinate Zn(2+).

The protein in the central section; belongs to the AAA ATPase family. This sequence in the C-terminal section; belongs to the peptidase M41 family. Homohexamer. Zn(2+) is required as a cofactor.

Its subcellular location is the cell membrane. Acts as a processive, ATP-dependent zinc metallopeptidase for both cytoplasmic and membrane proteins. Plays a role in the quality control of integral membrane proteins. The sequence is that of ATP-dependent zinc metalloprotease FtsH 4 (ftsh4) from Sphaerobacter thermophilus (strain ATCC 49802 / DSM 20745 / KCCM 41009 / NCIMB 13125 / S 6022).